The following is a 123-amino-acid chain: Ribonuclease P protein component (123 aa).

It belongs to the RnpA family. In terms of assembly, consists of a catalytic RNA component (M1 or rnpB) and a protein subunit.

The catalysed reaction is Endonucleolytic cleavage of RNA, removing 5'-extranucleotides from tRNA precursor.. In terms of biological role, RNaseP catalyzes the removal of the 5'-leader sequence from pre-tRNA to produce the mature 5'-terminus. It can also cleave other RNA substrates such as 4.5S RNA. The protein component plays an auxiliary but essential role in vivo by binding to the 5'-leader sequence and broadening the substrate specificity of the ribozyme. This is Ribonuclease P protein component from Streptococcus pneumoniae (strain JJA).